The chain runs to 503 residues: Maturase K (503 aa).

It belongs to the intron maturase 2 family. MatK subfamily.

The protein localises to the plastid. Its subcellular location is the chloroplast. Its function is as follows. Usually encoded in the trnK tRNA gene intron. Probably assists in splicing its own and other chloroplast group II introns. The sequence is that of Maturase K from Diospyros virginiana (American persimmon).